A 482-amino-acid polypeptide reads, in one-letter code: Glutamate synthase [NADPH] small chain (482 aa).

Residues 39–72 (ERANEQANRCSQCGVPFCQVHCPVSNNIPDWLKL) enclose the 4Fe-4S ferredoxin-type domain. [4Fe-4S] cluster contacts are provided by cysteine 95, cysteine 99, cysteine 105, and cysteine 109.

As to quaternary structure, aggregate of 4 catalytic active heterodimers, consisting of a large and a small subunit. [4Fe-4S] cluster is required as a cofactor.

The catalysed reaction is 2 L-glutamate + NADP(+) = L-glutamine + 2-oxoglutarate + NADPH + H(+). Its pathway is amino-acid biosynthesis; L-glutamate biosynthesis via GLT pathway; L-glutamate from 2-oxoglutarate and L-glutamine (NADP(+) route): step 1/1. The protein operates within energy metabolism; nitrogen metabolism. This chain is Glutamate synthase [NADPH] small chain (gltD), found in Azospirillum brasilense.